A 489-amino-acid polypeptide reads, in one-letter code: Envelope glycoprotein C homolog (489 aa).

A signal peptide spans 1–32 (MVSNMRVLRVLRLTGWVGIFLVLSLQQTSCAG). Topologically, residues 33 to 455 (LPHNVDTHHI…YYDATPSARG (423 aa)) are virion surface. The tract at residues 59 to 94 (EVPNSPTTELSTTVATKTAVPTTESTSSSEAHRNSS) is disordered. The segment covering 60–69 (VPNSPTTELS) has biased composition (polar residues). A compositionally biased stretch (low complexity) spans 70 to 81 (TTVATKTAVPTT). 5 N-linked (GlcNAc...) asparagine; by host glycosylation sites follow: asparagine 92, asparagine 112, asparagine 204, asparagine 346, and asparagine 392. Positions 250-348 (PASVDVLAPP…GDMISTSNAT (99 aa)) constitute an Ig-like domain. The chain crosses the membrane as a helical span at residues 456-486 (MPMIVTITAVLGLALFLGIGIIITALCFYLP). The Cytoplasmic segment spans residues 487-489 (GRN).

Belongs to the herpesviridae glycoprotein C family.

It localises to the virion membrane. The sequence is that of Envelope glycoprotein C homolog (gC) from Gallus gallus (Chicken).